A 1302-amino-acid polypeptide reads, in one-letter code: Serine-enriched protein (1302 aa).

The region spanning 40–158 (CDVTFLVGDT…IHTGCVTLQP (119 aa)) is the BTB domain. Disordered regions lie at residues 325-532 (SIDP…RSPT), 575-624 (PIPP…SVMR), 648-685 (FTRA…QKQM), 701-752 (YAKM…SSDE), 834-858 (FTRR…DSND), 1045-1090 (FQRS…RTEN), 1102-1163 (FSRA…GEEE), and 1187-1252 (VLTQ…SASP). The segment covering 337 to 364 (RQHHRHRHHHQSLPKIRKAKSQSFRTRR) has biased composition (basic residues). 4 stretches are compositionally biased toward polar residues: residues 378-388 (LTLNTSLTSGN), 410-430 (SPGS…TLRA), 437-449 (SGQL…TQGR), and 472-487 (GLRS…TVRS). The segment covering 589–623 (KSAEREREAAEAAAREKEKEKEKEAAQPQEKKSVM) has biased composition (basic and acidic residues). A compositionally biased stretch (low complexity) spans 664 to 680 (STFSASPAASSTAAKSA). The span at 713 to 723 (KRDDEEKEKQK) shows a compositional bias: basic and acidic residues. The segment covering 736–748 (DLSQTNADQQVGG) has biased composition (polar residues). A compositionally biased stretch (basic and acidic residues) spans 836 to 855 (RRSESREPIEPRISEERESD). Composition is skewed to low complexity over residues 1047–1056 (RSGSSCGGRK) and 1107–1128 (SPLS…SSGS). Residues 1187–1207 (VLTQQLSTGSMSTPSGYTNGT) show a composition bias toward polar residues. Positions 1226–1252 (APLSSCGFSSGSEFEPPSPRRAASASP) are enriched in low complexity.

The sequence is that of Serine-enriched protein (gprs) from Drosophila melanogaster (Fruit fly).